A 597-amino-acid chain; its full sequence is MVDTLGNMRRTHTCNELSAASAGTEVVLAGWVQRRRDHGGVIFVDLRDREGITQVVFNPDREPAVHAKAHDIRNEYVICVKGKVEKRPDDMVNPKLTTGEIEVAASELAILNTAKTPPFMVEDRIDVSESIRLKHRFVDLRRPAMQKNLLARHRAGMAAREFLNSQGFLDIETPFLTRNTPEGARDYLVPSRVNPGAFYALPQSPQLFKQMLMVAGFDRYYQIVRCFRDEDLRADRQPEFTQIDLEMSFVGEEDVMAIGEGLVANVVRQVTGEAVDLPFSRMTYDQAMADYGLDKPDLRFDMKLVDITDIAAGCGFQVFSGAVKNGGIVKALNAKGCADFTRKELDDYTEFVAIYKARGLAWVKVREDGWQSPIAKFFTDDEKASMAQRLNMAVGDLVFFGADAASVVNDSLGNLRNRIGERLGLVDKNRMCFLWVTDFPFFEYDETEKRYQAKHHPFTAPHEADMEHLHTDPEAVRSRAYDLVLNGTEIGGGSIRIHNRQVQEKMFEALGLAPEDYTAKFGFLLDALDSGAPPHGGMAFGFDRLVMLLCGESSIREVIAFPKTQKAACALTDAPSPADKKQLDELFIKVTADINKE.

Position 182 (Glu-182) interacts with L-aspartate. Positions 206–209 (QLFK) are aspartate. L-aspartate is bound at residue Arg-228. ATP contacts are provided by residues 228–230 (RDE) and Gln-237. His-455 provides a ligand contact to L-aspartate. Glu-489 is an ATP binding site. An L-aspartate-binding site is contributed by Arg-496. 541 to 544 (GFDR) is a binding site for ATP.

This sequence belongs to the class-II aminoacyl-tRNA synthetase family. Type 1 subfamily. In terms of assembly, homodimer.

The protein resides in the cytoplasm. The catalysed reaction is tRNA(Asx) + L-aspartate + ATP = L-aspartyl-tRNA(Asx) + AMP + diphosphate. Aspartyl-tRNA synthetase with relaxed tRNA specificity since it is able to aspartylate not only its cognate tRNA(Asp) but also tRNA(Asn). Reaction proceeds in two steps: L-aspartate is first activated by ATP to form Asp-AMP and then transferred to the acceptor end of tRNA(Asp/Asn). This chain is Aspartate--tRNA(Asp/Asn) ligase, found in Desulfosudis oleivorans (strain DSM 6200 / JCM 39069 / Hxd3) (Desulfococcus oleovorans).